A 667-amino-acid chain; its full sequence is tRNA 5-methylaminomethyl-2-thiouridine biosynthesis bifunctional protein MnmC (667 aa).

A tRNA (mnm(5)s(2)U34)-methyltransferase region spans residues Met1–Ala241. Residues Val268 to Val667 form an FAD-dependent cmnm(5)s(2)U34 oxidoreductase region.

It in the N-terminal section; belongs to the methyltransferase superfamily. tRNA (mnm(5)s(2)U34)-methyltransferase family. In the C-terminal section; belongs to the DAO family. FAD serves as cofactor.

The protein resides in the cytoplasm. The catalysed reaction is 5-aminomethyl-2-thiouridine(34) in tRNA + S-adenosyl-L-methionine = 5-methylaminomethyl-2-thiouridine(34) in tRNA + S-adenosyl-L-homocysteine + H(+). Its function is as follows. Catalyzes the last two steps in the biosynthesis of 5-methylaminomethyl-2-thiouridine (mnm(5)s(2)U) at the wobble position (U34) in tRNA. Catalyzes the FAD-dependent demodification of cmnm(5)s(2)U34 to nm(5)s(2)U34, followed by the transfer of a methyl group from S-adenosyl-L-methionine to nm(5)s(2)U34, to form mnm(5)s(2)U34. The polypeptide is tRNA 5-methylaminomethyl-2-thiouridine biosynthesis bifunctional protein MnmC (Haemophilus ducreyi (strain 35000HP / ATCC 700724)).